A 784-amino-acid chain; its full sequence is Cadherin-5 (784 aa).

Residues 1–24 (MQRLTELATALGAFLGLLAVAAMA) form the signal peptide. A propeptide spanning residues 25–45 (GPNFPQIDTPNMLPAHHRQKR) is cleaved from the precursor. 5 Cadherin domains span residues 46 to 149 (DWIW…WPVF), 150 to 256 (SHQV…FPVF), 257 to 371 (TQST…PPVF), 372 to 476 (QRHF…DNPP), and 477 to 593 (EFAQ…MAAQ). Topologically, residues 46–599 (DWIWNQMHID…MAAQAGVSIQ (554 aa)) are extracellular. 2 residues coordinate Ca(2+): Glu56 and Glu57. The N-linked (GlcNAc...) asparagine glycan is linked to Asn59. Ca(2+) contacts are provided by Asp107, Glu109, Asp141, Ile142, Asn143, Asp144, and Asn145. An N-linked (GlcNAc...) asparagine glycan is attached at Asn155. Ca(2+)-binding residues include Asp175, Asp177, His184, and Asp229. Asn441, Asn523, and Asn535 each carry an N-linked (GlcNAc...) asparagine glycan. A helical membrane pass occupies residues 600 to 620 (ALVAIFLCILTITVITLLIIL). The tract at residues 621-660 (RRRIRKQAHAHSKSALEIHEQLVTYDEEGGGEMDTTSYDV) is required for interaction with PALS1. The Cytoplasmic segment spans residues 621-784 (RRRIRKQAHA…GSDPQEELII (164 aa)).

Part of a complex composed of AMOTL2, MAGI1 and CDH5, within the complex AMOTL2 acts as a scaffold protein for the interaction of MAGI1 with CDH5. The complex is required for coupling actin fibers to cell junctions in endothelial cells. Within the complex AMOTL2 (via its N-terminus) interacts with CDH5. Interacts (via cadherin 5 domain) with PTPRB. Interacts with TRPC4. Interacts with KRIT1. Interacts with PARD3. Interacts with RTN4 (isoform B). Interacts with PALS1; the interaction promotes PALS1 localization to cell junctions and is required for CDH5-mediated vascular lumen formation and endothelial cell polarity. Interacts with CTNND1/p120-catenin; the interaction controls CADH5 endocytosis. Post-translationally, phosphorylated on tyrosine residues by KDR/VEGFR-2. Dephosphorylated by PTPRB. O-glycosylated. Expressed in postnatal endothelial cells of the retinal vascular plexus (at protein level).

The protein resides in the cell junction. It is found in the adherens junction. Its subcellular location is the cell membrane. It localises to the cytoplasm. In terms of biological role, cadherins are calcium-dependent cell adhesion proteins. They preferentially interact with themselves in a homophilic manner in connecting cells; cadherins may thus contribute to the sorting of heterogeneous cell types. This cadherin may play an important role in endothelial cell biology through control of the cohesion and organization of the intercellular junctions. It associates with alpha-catenin forming a link to the cytoskeleton. Plays a role in coupling actin fibers to cell junctions in endothelial cells, via acting as a cell junctional complex anchor for AMOTL2 and MAGI1. Acts in concert with KRIT1 and PALS1 to establish and maintain correct endothelial cell polarity and vascular lumen. These effects are mediated by recruitment and activation of the Par polarity complex and RAP1B. Required for activation of PRKCZ and for localization of phosphorylated PRKCZ, PARD3, TIAM1 and RAP1B to the cell junction. Associates with CTNND1/p120-catenin to control CADH5 endocytosis. The polypeptide is Cadherin-5 (Mus musculus (Mouse)).